A 349-amino-acid chain; its full sequence is Ferredoxin--NADP reductase 1 (349 aa).

Residues Glu-36, Lys-44, Tyr-48, Val-88, Leu-123, Asp-290, and Ser-331 each contribute to the FAD site.

It belongs to the ferredoxin--NADP reductase type 2 family. Homodimer. The cofactor is FAD.

It catalyses the reaction 2 reduced [2Fe-2S]-[ferredoxin] + NADP(+) + H(+) = 2 oxidized [2Fe-2S]-[ferredoxin] + NADPH. This Bacillus cereus (strain ATCC 10987 / NRS 248) protein is Ferredoxin--NADP reductase 1.